A 206-amino-acid polypeptide reads, in one-letter code: Protein-methionine-sulfoxide reductase heme-binding subunit MsrQ (206 aa).

Transmembrane regions (helical) follow at residues 10-30 (VFIAAAVWPLFWLYEAWSAVL), 42-62 (LGLGTLILLLITLAMTPLQKL), 75-95 (LGLWCFAYVVLHLAAYCVFVL), 110-130 (PYIIVGALGFLLLLVLAVTSN), 147-167 (LVYVVLGLGLLHMLWIVRADL), and 169-189 (EWAIYASIGALLLVLRIPPVM).

This sequence belongs to the MsrQ family. In terms of assembly, heterodimer of a catalytic subunit (MsrP) and a heme-binding subunit (MsrQ). Requires FMN as cofactor. Heme b is required as a cofactor.

The protein localises to the cell inner membrane. In terms of biological role, part of the MsrPQ system that repairs oxidized periplasmic proteins containing methionine sulfoxide residues (Met-O), using respiratory chain electrons. Thus protects these proteins from oxidative-stress damage caused by reactive species of oxygen and chlorine generated by the host defense mechanisms. MsrPQ is essential for the maintenance of envelope integrity under bleach stress, rescuing a wide series of structurally unrelated periplasmic proteins from methionine oxidation. MsrQ provides electrons for reduction to the reductase catalytic subunit MsrP, using the quinone pool of the respiratory chain. The protein is Protein-methionine-sulfoxide reductase heme-binding subunit MsrQ of Pseudomonas fluorescens (strain SBW25).